The following is a 316-amino-acid chain: Acetyl-coenzyme A carboxylase carboxyl transferase subunit beta, chloroplastic (316 aa).

A CoA carboxyltransferase N-terminal domain is found at 47 to 316 (LWTRCDNCEN…CKKFQNSFFK (270 aa)). The Zn(2+) site is built by Cys-51, Cys-54, Cys-70, and Cys-73. The C4-type zinc-finger motif lies at 51-73 (CDNCENMLYVRFLRQNKRICEEC).

It belongs to the AccD/PCCB family. In terms of assembly, acetyl-CoA carboxylase is a heterohexamer composed of biotin carboxyl carrier protein, biotin carboxylase and 2 subunits each of ACCase subunit alpha and ACCase plastid-coded subunit beta (accD). Zn(2+) serves as cofactor.

Its subcellular location is the plastid. It is found in the chloroplast stroma. The enzyme catalyses N(6)-carboxybiotinyl-L-lysyl-[protein] + acetyl-CoA = N(6)-biotinyl-L-lysyl-[protein] + malonyl-CoA. It functions in the pathway lipid metabolism; malonyl-CoA biosynthesis; malonyl-CoA from acetyl-CoA: step 1/1. Functionally, component of the acetyl coenzyme A carboxylase (ACC) complex. Biotin carboxylase (BC) catalyzes the carboxylation of biotin on its carrier protein (BCCP) and then the CO(2) group is transferred by the transcarboxylase to acetyl-CoA to form malonyl-CoA. This is Acetyl-coenzyme A carboxylase carboxyl transferase subunit beta, chloroplastic from Marchantia polymorpha (Common liverwort).